The primary structure comprises 240 residues: NAD(P)H-quinone oxidoreductase subunit K (240 aa).

Positions 55, 56, 120, and 151 each coordinate [4Fe-4S] cluster.

It belongs to the complex I 20 kDa subunit family. NDH-1 can be composed of about 15 different subunits; different subcomplexes with different compositions have been identified which probably have different functions. [4Fe-4S] cluster is required as a cofactor.

The protein localises to the cellular thylakoid membrane. It catalyses the reaction a plastoquinone + NADH + (n+1) H(+)(in) = a plastoquinol + NAD(+) + n H(+)(out). The enzyme catalyses a plastoquinone + NADPH + (n+1) H(+)(in) = a plastoquinol + NADP(+) + n H(+)(out). NDH-1 shuttles electrons from an unknown electron donor, via FMN and iron-sulfur (Fe-S) centers, to quinones in the respiratory and/or the photosynthetic chain. The immediate electron acceptor for the enzyme in this species is believed to be plastoquinone. Couples the redox reaction to proton translocation, and thus conserves the redox energy in a proton gradient. Cyanobacterial NDH-1 also plays a role in inorganic carbon-concentration. The polypeptide is NAD(P)H-quinone oxidoreductase subunit K (Trichodesmium erythraeum (strain IMS101)).